We begin with the raw amino-acid sequence, 417 residues long: D-galactonate dehydratase family member SeV_A0456 (417 aa).

Residues glutamine 43 and histidine 127 each coordinate substrate. Tyrosine 158 serves as the catalytic Proton donor/acceptor. Aspartate 223 is a binding site for Mg(2+). The active-site Proton donor/acceptor is histidine 225. Residues glutamate 249 and glutamate 275 each coordinate Mg(2+). Glutamate 275, arginine 296, histidine 325, aspartate 329, and glutamate 352 together coordinate substrate.

This sequence belongs to the mandelate racemase/muconate lactonizing enzyme family. GalD subfamily. Mg(2+) is required as a cofactor.

The enzyme catalyses D-gluconate = 2-dehydro-3-deoxy-D-gluconate + H2O. In terms of biological role, has low D-gluconate dehydratase activity (in vitro), suggesting that it has no significant role in D-gluconate degradation in vivo. Has no detectable activity with a panel of 70 other acid sugars (in vitro). This Salmonella virchow (strain SL491) protein is D-galactonate dehydratase family member SeV_A0456.